The chain runs to 79 residues: Large ribosomal subunit protein bL28 (79 aa).

Belongs to the bacterial ribosomal protein bL28 family.

The polypeptide is Large ribosomal subunit protein bL28 (Christiangramia forsetii (strain DSM 17595 / CGMCC 1.15422 / KT0803) (Gramella forsetii)).